The sequence spans 128 residues: Gastrotropin (128 aa).

A2 bears the N-acetylalanine mark.

It belongs to the calycin superfamily. Fatty-acid binding protein (FABP) family.

Its subcellular location is the cytoplasm. It is found in the membrane. Its function is as follows. Binds to bile acids and is involved in enterohepatic bile acid metabolism. Required for efficient apical to basolateral transport of conjugated bile acids in ileal enterocytes. Stimulates gastric acid and pepsinogen secretion. The polypeptide is Gastrotropin (FABP6) (Bos taurus (Bovine)).